Consider the following 496-residue polypeptide: Glycerol kinase (496 aa).

Thr-12 is a binding site for ADP. ATP-binding residues include Thr-12, Thr-13, and Ser-14. Residue Thr-12 participates in sn-glycerol 3-phosphate binding. Arg-16 contacts ADP. The sn-glycerol 3-phosphate site is built by Arg-82, Glu-83, and Tyr-134. Glycerol contacts are provided by Arg-82, Glu-83, and Tyr-134. Residue His-230 is modified to Phosphohistidine; by HPr. Residue Asp-244 participates in sn-glycerol 3-phosphate binding. Residues Asp-244 and Gln-245 each coordinate glycerol. ADP contacts are provided by Thr-266 and Gly-309. Thr-266, Gly-309, Gln-313, and Gly-410 together coordinate ATP. ADP-binding residues include Gly-410 and Asn-414.

It belongs to the FGGY kinase family. As to quaternary structure, homotetramer and homodimer (in equilibrium). The phosphoenolpyruvate-dependent sugar phosphotransferase system (PTS), including enzyme I, and histidine-containing protein (HPr) are required for the phosphorylation, which leads to the activation of the enzyme.

It catalyses the reaction glycerol + ATP = sn-glycerol 3-phosphate + ADP + H(+). It participates in polyol metabolism; glycerol degradation via glycerol kinase pathway; sn-glycerol 3-phosphate from glycerol: step 1/1. Activated by phosphorylation and inhibited by fructose 1,6-bisphosphate (FBP). Functionally, key enzyme in the regulation of glycerol uptake and metabolism. Catalyzes the phosphorylation of glycerol to yield sn-glycerol 3-phosphate. The polypeptide is Glycerol kinase (Bacillus anthracis (strain A0248)).